Reading from the N-terminus, the 504-residue chain is MXXXXGYLEFDGARQQSFLYPLFFREYIYVLAYDHRLNRLNRNRSIFVENVDSDKKYSSLIVKRLILRMYEQNCLIFSIKDLNQNTSLGHTNLFYYQMISVLFAVIVEIPFSLRLGSSFEGKQLKKSYNLQSIHSIFPFLEDKLTHFNYVLDVLIPYPIHLEILVQTLRYRVKDASSLHFFRFCLYESCNWKNFDIKKTSILNPRFFLFLYNSHVCEYESIFFVLRKRSSHLRSTSYKVLFERILFYVKIQHFFKVFVNNFPAILGLLKDPFLHYVRYHGKCILATKDTPLLMNKWKYYFVNLWQCYFSVWFQPQKVNINQLSKDNFEFMGYLSSLRLNPLVVRSQMLENSFLIDNVRIKLYSKIPISSIIGSLAKDKFCNVLGHPISKATWADSSDSDILNRFVRICRNISHYYSGSSKKKNLYRIKYILRLCCVKTLARKHKSTVRAFLKRLGSGLLEEFLTGEDQVLSLIFPRSYYASKRLYRVRIWYLDILSLNDLVNHE.

This sequence belongs to the intron maturase 2 family. MatK subfamily.

It localises to the plastid. The protein localises to the chloroplast. Usually encoded in the trnK tRNA gene intron. Probably assists in splicing its own and other chloroplast group II introns. This is Maturase K from Thlaspi arvense (Field penny-cress).